The primary structure comprises 83 residues: U-actitoxin-Aeq6b (83 aa).

The N-terminal stretch at 1 to 20 (MIYKAVFVCLVLVLLGDVFC) is a signal peptide. The propeptide occupies 21–36 (SPRNSGGGTLNDNPFE). P82 is subject to Proline amide.

Post-translationally, contains 3 disulfide bonds. In terms of tissue distribution, expressed by acrorhagi.

It localises to the secreted. It is found in the nematocyst. Functionally, toxin. This chain is U-actitoxin-Aeq6b, found in Actinia equina (Beadlet anemone).